An 84-amino-acid chain; its full sequence is Small ribosomal subunit protein uS17 (84 aa).

This sequence belongs to the universal ribosomal protein uS17 family. As to quaternary structure, part of the 30S ribosomal subunit.

Functionally, one of the primary rRNA binding proteins, it binds specifically to the 5'-end of 16S ribosomal RNA. This chain is Small ribosomal subunit protein uS17, found in Caldanaerobacter subterraneus subsp. tengcongensis (strain DSM 15242 / JCM 11007 / NBRC 100824 / MB4) (Thermoanaerobacter tengcongensis).